The sequence spans 132 residues: Interleukin-5 (132 aa).

The N-terminal stretch at 1–17 (MRLPLQLSILTLAWVWA) is a signal peptide. Asparagine 45, asparagine 74, and asparagine 88 each carry an N-linked (GlcNAc...) asparagine glycan.

Belongs to the IL-5 family. As to quaternary structure, homodimer; disulfide-linked. Interacts with IL5RA. Interacts with CSF2RB.

The protein localises to the secreted. Functionally, homodimeric cytokine expressed predominantly by T-lymphocytes and NK cells that plays an important role in the survival, differentiation, and chemotaxis of eosinophils. Also acts on activated and resting B-cells to induce immunoglobulin production, growth, and differentiation. Mechanistically, exerts its biological effects through a receptor composed of IL5RA subunit and the cytokine receptor common subunit beta/CSF2RB. Binding to the receptor leads to activation of various kinases including LYN, SYK and JAK2 and thereby propagates signals through the RAS-MAPK and JAK-STAT5 pathways respectively. The chain is Interleukin-5 (IL5) from Meriones unguiculatus (Mongolian jird).